A 255-amino-acid chain; its full sequence is tRNA-cytidine(32) 2-sulfurtransferase (255 aa).

A PP-loop motif motif is present at residues 37-42 (SGGKDS). [4Fe-4S] cluster-binding residues include Cys-112, Cys-115, and Cys-202.

The protein belongs to the TtcA family. Homodimer. Requires Mg(2+) as cofactor. The cofactor is [4Fe-4S] cluster.

It localises to the cytoplasm. It catalyses the reaction cytidine(32) in tRNA + S-sulfanyl-L-cysteinyl-[cysteine desulfurase] + AH2 + ATP = 2-thiocytidine(32) in tRNA + L-cysteinyl-[cysteine desulfurase] + A + AMP + diphosphate + H(+). It functions in the pathway tRNA modification. Catalyzes the ATP-dependent 2-thiolation of cytidine in position 32 of tRNA, to form 2-thiocytidine (s(2)C32). The sulfur atoms are provided by the cysteine/cysteine desulfurase (IscS) system. The protein is tRNA-cytidine(32) 2-sulfurtransferase of Citrifermentans bemidjiense (strain ATCC BAA-1014 / DSM 16622 / JCM 12645 / Bem) (Geobacter bemidjiensis).